The chain runs to 425 residues: Serine--tRNA ligase (425 aa).

Position 230-232 (230-232 (TAE)) interacts with L-serine. Residue 261-263 (RSE) participates in ATP binding. An L-serine-binding site is contributed by E284. 348 to 351 (EISS) contributes to the ATP binding site. S384 contacts L-serine.

The protein belongs to the class-II aminoacyl-tRNA synthetase family. Type-1 seryl-tRNA synthetase subfamily. As to quaternary structure, homodimer. The tRNA molecule binds across the dimer.

It is found in the cytoplasm. It catalyses the reaction tRNA(Ser) + L-serine + ATP = L-seryl-tRNA(Ser) + AMP + diphosphate + H(+). It carries out the reaction tRNA(Sec) + L-serine + ATP = L-seryl-tRNA(Sec) + AMP + diphosphate + H(+). The protein operates within aminoacyl-tRNA biosynthesis; selenocysteinyl-tRNA(Sec) biosynthesis; L-seryl-tRNA(Sec) from L-serine and tRNA(Sec): step 1/1. Catalyzes the attachment of serine to tRNA(Ser). Is also able to aminoacylate tRNA(Sec) with serine, to form the misacylated tRNA L-seryl-tRNA(Sec), which will be further converted into selenocysteinyl-tRNA(Sec). This Streptococcus pyogenes serotype M12 (strain MGAS2096) protein is Serine--tRNA ligase.